Here is a 399-residue protein sequence, read N- to C-terminus: Acetylornithine aminotransferase (399 aa).

Pyridoxal 5'-phosphate is bound by residues G97–A98 and F130. R133 serves as a coordination point for N(2)-acetyl-L-ornithine. A pyridoxal 5'-phosphate-binding site is contributed by D215 to Q218. K244 carries the post-translational modification N6-(pyridoxal phosphate)lysine. Position 272 (T272) interacts with N(2)-acetyl-L-ornithine. T273 contributes to the pyridoxal 5'-phosphate binding site.

The protein belongs to the class-III pyridoxal-phosphate-dependent aminotransferase family. ArgD subfamily. As to quaternary structure, homodimer. Pyridoxal 5'-phosphate serves as cofactor.

The protein localises to the cytoplasm. The enzyme catalyses N(2)-acetyl-L-ornithine + 2-oxoglutarate = N-acetyl-L-glutamate 5-semialdehyde + L-glutamate. It participates in amino-acid biosynthesis; L-arginine biosynthesis; N(2)-acetyl-L-ornithine from L-glutamate: step 4/4. This Mesorhizobium japonicum (strain LMG 29417 / CECT 9101 / MAFF 303099) (Mesorhizobium loti (strain MAFF 303099)) protein is Acetylornithine aminotransferase.